The chain runs to 245 residues: tRNA pseudouridine synthase A (245 aa).

D52 acts as the Nucleophile in catalysis. Residue Y111 coordinates substrate.

It belongs to the tRNA pseudouridine synthase TruA family. As to quaternary structure, homodimer.

The enzyme catalyses uridine(38/39/40) in tRNA = pseudouridine(38/39/40) in tRNA. Its function is as follows. Formation of pseudouridine at positions 38, 39 and 40 in the anticodon stem and loop of transfer RNAs. In Thermotoga sp. (strain RQ2), this protein is tRNA pseudouridine synthase A.